A 188-amino-acid chain; its full sequence is GMP synthase [glutamine-hydrolyzing] subunit A (188 aa).

The 186-residue stretch at 3-188 folds into the Glutamine amidotransferase type-1 domain; sequence KVLVVAFGGQ…FQNFVELCKR (186 aa). Cys-79 functions as the Nucleophile in the catalytic mechanism. Residues His-166 and Glu-168 contribute to the active site.

Heterodimer composed of a glutamine amidotransferase subunit (A) and a GMP-binding subunit (B).

The catalysed reaction is XMP + L-glutamine + ATP + H2O = GMP + L-glutamate + AMP + diphosphate + 2 H(+). It functions in the pathway purine metabolism; GMP biosynthesis; GMP from XMP (L-Gln route): step 1/1. Catalyzes the synthesis of GMP from XMP. This Ignicoccus hospitalis (strain KIN4/I / DSM 18386 / JCM 14125) protein is GMP synthase [glutamine-hydrolyzing] subunit A.